A 215-amino-acid polypeptide reads, in one-letter code: MVRGCRVGQRTGTVGVRVFPVGLCALSLQARDCRGMCGKRLGKVMVLGCMLPGVAARVSLSPKLGVYGDARGGSDLWGICIQAPTMPDTENQAPPRYAPETPLVGLDVAFRAENGFLLQLTVDAALTRLMFCGRCLAGYSFRPGEGSTHLSVAAGFECTALIYDSQHFLSVLGQGLLQPSSSSYSAGNWHRPRSLLGVLTCTAKEVGAIHEESAY.

To T.pallidum TP_0127, TP_0618 and TP_0619.

This is an uncharacterized protein from Treponema pallidum (strain Nichols).